The chain runs to 228 residues: Glycerol-3-phosphate acyltransferase (228 aa).

6 helical membrane-spanning segments follow: residues 1-21, 56-76, 104-124, 136-156, 161-181, and 183-203; these read MINW…LGAT, VPAL…IALV, MVII…WIGF, ILLA…IVVL, IVSL…FFTG, and PLPY…RHIS.

This sequence belongs to the PlsY family. In terms of assembly, probably interacts with PlsX.

It is found in the cell inner membrane. It carries out the reaction an acyl phosphate + sn-glycerol 3-phosphate = a 1-acyl-sn-glycero-3-phosphate + phosphate. It functions in the pathway lipid metabolism; phospholipid metabolism. Functionally, catalyzes the transfer of an acyl group from acyl-phosphate (acyl-PO(4)) to glycerol-3-phosphate (G3P) to form lysophosphatidic acid (LPA). This enzyme utilizes acyl-phosphate as fatty acyl donor, but not acyl-CoA or acyl-ACP. The sequence is that of Glycerol-3-phosphate acyltransferase from Trichodesmium erythraeum (strain IMS101).